We begin with the raw amino-acid sequence, 305 residues long: MGDFIGHISPGLFLVFYGLYQAVIVSRAVIFNDSLLYPSYLSKNKGKWARLWKIAHAGWLKVVIGSLLIVYEISCVKEGLTLMTKGVPPRFMYPKEWQHLTMFFLLTLDGCVEMVSKNVLRQRCVLLERGATVLGVYVLLLLLVSHVKESSGVELQVHSLLILVVFLLMLVLTAELWAPEMFHLWMIETFLILIMGSWLIQAAFILFRPVSGFPWEDDDISDIMFVTTFFCWHVMINALCMLGIYGVSSFWHRCYSPSLRPMGSKEALYQESSSGTFYKLLQEAEQQDKDDQAPLLSKISPCDRA.

The helical transmembrane segment at 4 to 24 (FIGHISPGLFLVFYGLYQAVI) threads the bilayer. An N-linked (GlcNAc...) asparagine glycan is attached at Asn32. 5 helical membrane passes run 54–74 (IAHAGWLKVVIGSLLIVYEIS), 124–144 (CVLLERGATVLGVYVLLLLLV), 159–179 (SLLILVVFLLMLVLTAELWAP), 187–207 (IETFLILIMGSWLIQAAFILF), and 223–243 (IMFVTTFFCWHVMINALCMLG). A disordered region spans residues 285–305 (EQQDKDDQAPLLSKISPCDRA).

Belongs to the TMEM45 family.

The protein localises to the membrane. This Mus musculus (Mouse) protein is Transmembrane epididymal protein 1A.